The chain runs to 83 residues: Mu-theraphotoxin-Hhn2j 4 (83 aa).

The first 21 residues, 1–21 (MKASMFLALAGLVLLFVVGYA), serve as a signal peptide directing secretion. A propeptide spanning residues 22–48 (SESEEKEFPIELLSKIFAVDVFKGEGR) is cleaved from the precursor. 3 cysteine pairs are disulfide-bonded: cysteine 50–cysteine 65, cysteine 57–cysteine 70, and cysteine 64–cysteine 77. Residue leucine 81 is modified to Leucine amide.

The protein belongs to the neurotoxin 10 (Hwtx-1) family. 15 (Hntx-3) subfamily. Monomer. In terms of tissue distribution, expressed by the venom gland.

The protein localises to the secreted. In terms of biological role, lethal neurotoxin. Selectively blocks tetrodotoxin-sensitive voltage-gated sodium channels (Nav). Does not affect tetrodotoxin-resistant voltage-gated sodium channels or calcium channels. In Cyriopagopus hainanus (Chinese bird spider), this protein is Mu-theraphotoxin-Hhn2j 4.